The chain runs to 234 residues: Orotidine 5'-phosphate decarboxylase (234 aa).

Residues aspartate 17, lysine 38, aspartate 65–threonine 74, threonine 122, arginine 184, glutamine 193, glycine 213, and arginine 214 each bind substrate. Lysine 67 (proton donor) is an active-site residue.

This sequence belongs to the OMP decarboxylase family. Type 1 subfamily. As to quaternary structure, homodimer.

The catalysed reaction is orotidine 5'-phosphate + H(+) = UMP + CO2. Its pathway is pyrimidine metabolism; UMP biosynthesis via de novo pathway; UMP from orotate: step 2/2. Its function is as follows. Catalyzes the decarboxylation of orotidine 5'-monophosphate (OMP) to uridine 5'-monophosphate (UMP). The protein is Orotidine 5'-phosphate decarboxylase of Thermosynechococcus vestitus (strain NIES-2133 / IAM M-273 / BP-1).